The chain runs to 144 residues: Benzoylsuccinyl-CoA thiolase subunit BbsA (144 aa).

The Zn(2+) site is built by cysteine 40, cysteine 43, cysteine 54, and cysteine 57.

This sequence belongs to the BbsA family. As to quaternary structure, heterotetramer composed of two BbsA subunits and two BbsB subunits. BbsA forms homodimeric subcomplexes. Both BbsA and BbsB are essential for enzymatic activity.

The catalysed reaction is (S)-2-benzoylsuccinyl-CoA + CoA = benzoyl-CoA + succinyl-CoA. It participates in xenobiotic degradation; toluene degradation. In terms of biological role, component of the BbsAB thiolase complex, which catalyzes the thiolytic cleavage of (S)-2-benzoylsuccinyl-CoA to succinyl-CoA and benzoyl-CoA, the final step of anaerobic toluene metabolism. The BbsA subunit critically contributes to an induced-fit process for productive binding of a CoA substrate into the active site of BbsB. This is Benzoylsuccinyl-CoA thiolase subunit BbsA from Thauera aromatica.